Reading from the N-terminus, the 138-residue chain is MPEKMQVLGSRKGLTPAVQNYTMVNVSDNSGAKEAMIISVFGYRGALRRVPYANVGDLVMVSVRKGAPDVRKQKFKAVVIRQRMPFRRPDGTWISFDDNAVVIVNPDGTAKGTEIRGPVAREAAERWPKVASLATLIV.

Belongs to the universal ribosomal protein uL14 family. In terms of assembly, part of the 50S ribosomal subunit. Forms a cluster with proteins L3 and L24e, part of which may contact the 16S rRNA in 2 intersubunit bridges.

Binds to 23S rRNA. Forms part of two intersubunit bridges in the 70S ribosome. This Metallosphaera sedula (strain ATCC 51363 / DSM 5348 / JCM 9185 / NBRC 15509 / TH2) protein is Large ribosomal subunit protein uL14.